Consider the following 120-residue polypeptide: NAD(P)H-quinone oxidoreductase subunit 3 (120 aa).

A run of 3 helical transmembrane segments spans residues 6 to 26 (GYDA…LALV), 64 to 84 (MFAL…PWAV), and 89 to 109 (LGLL…VALA).

The protein belongs to the complex I subunit 3 family. In terms of assembly, NDH-1 can be composed of about 15 different subunits; different subcomplexes with different compositions have been identified which probably have different functions.

The protein resides in the cellular thylakoid membrane. It carries out the reaction a plastoquinone + NADH + (n+1) H(+)(in) = a plastoquinol + NAD(+) + n H(+)(out). The enzyme catalyses a plastoquinone + NADPH + (n+1) H(+)(in) = a plastoquinol + NADP(+) + n H(+)(out). Functionally, NDH-1 shuttles electrons from an unknown electron donor, via FMN and iron-sulfur (Fe-S) centers, to quinones in the respiratory and/or the photosynthetic chain. The immediate electron acceptor for the enzyme in this species is believed to be plastoquinone. Couples the redox reaction to proton translocation, and thus conserves the redox energy in a proton gradient. Cyanobacterial NDH-1 also plays a role in inorganic carbon-concentration. The polypeptide is NAD(P)H-quinone oxidoreductase subunit 3 (Synechococcus sp. (strain CC9902)).